The sequence spans 295 residues: Small ribosomal subunit protein uS2 (295 aa).

The disordered stretch occupies residues 242–295 (APVEPTLARELAPEAPAPEAPAEEAPAAEAAPAAEAAPAAEAAPAEASSEEQAG). Positions 264-288 (EEAPAAEAAPAAEAAPAAEAAPAEA) are enriched in low complexity.

This sequence belongs to the universal ribosomal protein uS2 family.

This Phenylobacterium zucineum (strain HLK1) protein is Small ribosomal subunit protein uS2.